Reading from the N-terminus, the 375-residue chain is Queuine tRNA-ribosyltransferase (375 aa).

Asp90 (proton acceptor) is an active-site residue. Substrate-binding positions include 90 to 94 (DSGGF), Asp144, Gln190, and Gly217. The segment at 248 to 254 (GIGTPHY) is RNA binding. Asp267 functions as the Nucleophile in the catalytic mechanism. Residues 272 to 276 (ARITR) are RNA binding; important for wobble base 34 recognition. Positions 305, 307, 310, and 336 each coordinate Zn(2+).

Belongs to the queuine tRNA-ribosyltransferase family. Homodimer. Within each dimer, one monomer is responsible for RNA recognition and catalysis, while the other monomer binds to the replacement base PreQ1. Zn(2+) is required as a cofactor.

It carries out the reaction 7-aminomethyl-7-carbaguanine + guanosine(34) in tRNA = 7-aminomethyl-7-carbaguanosine(34) in tRNA + guanine. It participates in tRNA modification; tRNA-queuosine biosynthesis. Its function is as follows. Catalyzes the base-exchange of a guanine (G) residue with the queuine precursor 7-aminomethyl-7-deazaguanine (PreQ1) at position 34 (anticodon wobble position) in tRNAs with GU(N) anticodons (tRNA-Asp, -Asn, -His and -Tyr). Catalysis occurs through a double-displacement mechanism. The nucleophile active site attacks the C1' of nucleotide 34 to detach the guanine base from the RNA, forming a covalent enzyme-RNA intermediate. The proton acceptor active site deprotonates the incoming PreQ1, allowing a nucleophilic attack on the C1' of the ribose to form the product. After dissociation, two additional enzymatic reactions on the tRNA convert PreQ1 to queuine (Q), resulting in the hypermodified nucleoside queuosine (7-(((4,5-cis-dihydroxy-2-cyclopenten-1-yl)amino)methyl)-7-deazaguanosine). The sequence is that of Queuine tRNA-ribosyltransferase from Borreliella burgdorferi (strain ZS7) (Borrelia burgdorferi).